A 161-amino-acid chain; its full sequence is MAEVANNEQQAPQFNIQRVYTKDVSFETPNSPAVFQKEWNPEVKLDLDTRSAKLADDVYEVVLSLTVTAQNAGETAFLCEVQQAGIFSIAGLSEPQLAHSLGAYCPNILFPYAREAVGSLVGRGTFPQLNLAPVNFDALFAQYVQQRQAAAAAPAAEEANA.

This sequence belongs to the SecB family. As to quaternary structure, homotetramer, a dimer of dimers. One homotetramer interacts with 1 SecA dimer.

The protein resides in the cytoplasm. One of the proteins required for the normal export of preproteins out of the cell cytoplasm. It is a molecular chaperone that binds to a subset of precursor proteins, maintaining them in a translocation-competent state. It also specifically binds to its receptor SecA. In Shewanella sp. (strain MR-7), this protein is Protein-export protein SecB.